Consider the following 416-residue polypeptide: Ribulose bisphosphate carboxylase large chain (416 aa).

Substrate contacts are provided by Asn102 and Thr152. Lys154 serves as the catalytic Proton acceptor. Substrate is bound at residue Lys156. Lys180, Asp182, and Glu183 together coordinate Mg(2+). Lys180 carries the post-translational modification N6-carboxylysine. The active-site Proton acceptor is the His273. Residues Arg274, His306, and Ser358 each contribute to the substrate site.

It belongs to the RuBisCO large chain family. Type I subfamily. In terms of assembly, heterohexadecamer of 8 large chains and 8 small chains; disulfide-linked. The disulfide link is formed within the large subunit homodimers. Mg(2+) is required as a cofactor. The disulfide bond which can form in the large chain dimeric partners within the hexadecamer appears to be associated with oxidative stress and protein turnover.

The protein localises to the plastid. It localises to the chloroplast. It catalyses the reaction 2 (2R)-3-phosphoglycerate + 2 H(+) = D-ribulose 1,5-bisphosphate + CO2 + H2O. The catalysed reaction is D-ribulose 1,5-bisphosphate + O2 = 2-phosphoglycolate + (2R)-3-phosphoglycerate + 2 H(+). In terms of biological role, ruBisCO catalyzes two reactions: the carboxylation of D-ribulose 1,5-bisphosphate, the primary event in carbon dioxide fixation, as well as the oxidative fragmentation of the pentose substrate in the photorespiration process. Both reactions occur simultaneously and in competition at the same active site. In Arthropteris beckleri (Fern), this protein is Ribulose bisphosphate carboxylase large chain (rbcL).